A 593-amino-acid polypeptide reads, in one-letter code: RNA-binding protein 47 (593 aa).

Residues 1 to 20 (MTAEDSTAAMSSDSAAGSSA) are compositionally biased toward low complexity. Residues 1–25 (MTAEDSTAAMSSDSAAGSSAKVPEG) are disordered. RRM domains are found at residues 71–149 (CEVF…CSVD), 151–233 (CRLF…WAEP), and 246–318 (KILY…LAKP). Arginine 332 carries the omega-N-methylarginine modification. Asymmetric dimethylarginine; alternate occurs at positions 394 and 405. Residues arginine 394 and arginine 405 each carry the omega-N-methylarginine; alternate modification.

It belongs to the RRM RBM47 family. Homodimer. Interacts with A1CF. Interacts with APOBEC1; form an mRNA editing complex. Interacts with RBPMS.

Its subcellular location is the nucleus. It localises to the cytoplasm. Single-stranded RNA-binding protein that functions in a variety of RNA processes, including alternative splicing, RNA stabilization, and RNA editing. Functions as an enzyme-substrate adapter for the cytidine deaminase APOBEC1. With APOBEC1 forms an mRNA editing complex involved into cytidine to uridine editing of a variety of mRNA molecules. Through the binding of their 3'UTR, also stabilizes a variety of mRNAs and regulates the expression of genes such as the interferon alpha/beta receptor and interleukin-10. Also involved in the alternative splicing of several genes including TJP1. Binds the pre-mRNA (U)GCAUG consensus sequences in downstream intronic regions of alternative exons, regulating their exclusion and inclusion into mRNAs. Independently of its RNA-binding activity, could negatively regulate MAVS by promoting its lysosomal degradation. The polypeptide is RNA-binding protein 47 (Homo sapiens (Human)).